A 245-amino-acid polypeptide reads, in one-letter code: 8-amino-3,8-dideoxy-manno-octulosonate cytidylyltransferase (245 aa).

This sequence belongs to the KdsB family.

The protein localises to the cytoplasm. It carries out the reaction 8-amino-3,8-dideoxy-alpha-D-manno-octulosonate + CTP = CMP-8-amino-3,8-dideoxy-alpha-D-manno-oct-2-ulosonate + diphosphate. It functions in the pathway bacterial outer membrane biogenesis; lipopolysaccharide biosynthesis. Activates KDO8N (a required 8-carbon sugar) for incorporation into bacterial lipopolysaccharide in the Shewanella genus. This Shewanella baltica (strain OS195) protein is 8-amino-3,8-dideoxy-manno-octulosonate cytidylyltransferase.